The following is a 381-amino-acid chain: 4-hydroxy-3-methylbut-2-en-1-yl diphosphate synthase (flavodoxin) (381 aa).

The [4Fe-4S] cluster site is built by Cys-280, Cys-283, Cys-315, and Glu-322.

The protein belongs to the IspG family. Requires [4Fe-4S] cluster as cofactor.

It catalyses the reaction (2E)-4-hydroxy-3-methylbut-2-enyl diphosphate + oxidized [flavodoxin] + H2O + 2 H(+) = 2-C-methyl-D-erythritol 2,4-cyclic diphosphate + reduced [flavodoxin]. It participates in isoprenoid biosynthesis; isopentenyl diphosphate biosynthesis via DXP pathway; isopentenyl diphosphate from 1-deoxy-D-xylulose 5-phosphate: step 5/6. Converts 2C-methyl-D-erythritol 2,4-cyclodiphosphate (ME-2,4cPP) into 1-hydroxy-2-methyl-2-(E)-butenyl 4-diphosphate. This is 4-hydroxy-3-methylbut-2-en-1-yl diphosphate synthase (flavodoxin) from Clavibacter michiganensis subsp. michiganensis (strain NCPPB 382).